Reading from the N-terminus, the 361-residue chain is Phosphoserine aminotransferase (361 aa).

Arg42 is a binding site for L-glutamate. Pyridoxal 5'-phosphate is bound by residues 76-77 (GR), Trp102, Thr154, Asp173, and Gln196. Residue Lys197 is modified to N6-(pyridoxal phosphate)lysine. Pyridoxal 5'-phosphate is bound at residue 238 to 239 (NT).

Belongs to the class-V pyridoxal-phosphate-dependent aminotransferase family. SerC subfamily. Homodimer. It depends on pyridoxal 5'-phosphate as a cofactor.

The protein localises to the cytoplasm. It catalyses the reaction O-phospho-L-serine + 2-oxoglutarate = 3-phosphooxypyruvate + L-glutamate. The enzyme catalyses 4-(phosphooxy)-L-threonine + 2-oxoglutarate = (R)-3-hydroxy-2-oxo-4-phosphooxybutanoate + L-glutamate. The protein operates within amino-acid biosynthesis; L-serine biosynthesis; L-serine from 3-phospho-D-glycerate: step 2/3. Its pathway is cofactor biosynthesis; pyridoxine 5'-phosphate biosynthesis; pyridoxine 5'-phosphate from D-erythrose 4-phosphate: step 3/5. Catalyzes the reversible conversion of 3-phosphohydroxypyruvate to phosphoserine and of 3-hydroxy-2-oxo-4-phosphonooxybutanoate to phosphohydroxythreonine. The chain is Phosphoserine aminotransferase from Idiomarina loihiensis (strain ATCC BAA-735 / DSM 15497 / L2-TR).